The sequence spans 363 residues: Histidinol-phosphate aminotransferase (363 aa).

Lys-227 bears the N6-(pyridoxal phosphate)lysine mark.

This sequence belongs to the class-II pyridoxal-phosphate-dependent aminotransferase family. Histidinol-phosphate aminotransferase subfamily. As to quaternary structure, homodimer. The cofactor is pyridoxal 5'-phosphate.

The catalysed reaction is L-histidinol phosphate + 2-oxoglutarate = 3-(imidazol-4-yl)-2-oxopropyl phosphate + L-glutamate. It functions in the pathway amino-acid biosynthesis; L-histidine biosynthesis; L-histidine from 5-phospho-alpha-D-ribose 1-diphosphate: step 7/9. This Akkermansia muciniphila (strain ATCC BAA-835 / DSM 22959 / JCM 33894 / BCRC 81048 / CCUG 64013 / CIP 107961 / Muc) protein is Histidinol-phosphate aminotransferase.